A 526-amino-acid polypeptide reads, in one-letter code: Phosphoenolpyruvate carboxykinase (ATP) (526 aa).

3 residues coordinate substrate: arginine 55, tyrosine 190, and lysine 196. Residues lysine 196, histidine 215, and 231-239 (GLSGTGKTT) contribute to the ATP site. Positions 196 and 215 each coordinate Mn(2+). Residue aspartate 252 participates in Mn(2+) binding. Residues glutamate 280, arginine 317, and threonine 442 each contribute to the ATP site. Arginine 317 contacts substrate.

It belongs to the phosphoenolpyruvate carboxykinase (ATP) family. It depends on Mn(2+) as a cofactor.

The protein resides in the cytoplasm. The catalysed reaction is oxaloacetate + ATP = phosphoenolpyruvate + ADP + CO2. Its pathway is carbohydrate biosynthesis; gluconeogenesis. Involved in the gluconeogenesis. Catalyzes the conversion of oxaloacetate (OAA) to phosphoenolpyruvate (PEP) through direct phosphoryl transfer between the nucleoside triphosphate and OAA. The chain is Phosphoenolpyruvate carboxykinase (ATP) from Alkaliphilus oremlandii (strain OhILAs) (Clostridium oremlandii (strain OhILAs)).